Consider the following 315-residue polypeptide: Olfactory receptor 2V1 (315 aa).

The Extracellular portion of the chain corresponds to 1 to 31; it reads MGRWVNQSYTDGFFLLGIFSHSQTDLVLFSA. An N-linked (GlcNAc...) asparagine glycan is attached at Asn-6. The chain crosses the membrane as a helical span at residues 32 to 52; sequence VMVVFTVALCGNVLLIFLIYL. Residues 53-58 lie on the Cytoplasmic side of the membrane; sequence DAGLHT. The chain crosses the membrane as a helical span at residues 59 to 79; sequence PMYFFLSQLSLMDLMLVCNIV. Residues 80-99 are Extracellular-facing; it reads PKMAANFLSGRKSISFVGCG. Cys-98 and Cys-180 are joined by a disulfide. Residues 100–120 form a helical membrane-spanning segment; it reads IQIGFFVSLVGSEGLLLGLMA. Residues 121–149 are Cytoplasmic-facing; sequence YDRYVAVSHPLHYPILMNQRVCLQITGSS. The helical transmembrane segment at 150–170 threads the bilayer; the sequence is WAFGIIDGVIQMVAAMGLPYC. At 171–198 the chain is on the extracellular side; the sequence is GSRSVDHFFCEVQALLKLACADTSLFDT. A helical membrane pass occupies residues 199 to 219; sequence LLFACCVFMLLLPFSIIMASY. Over 220 to 238 the chain is Cytoplasmic; the sequence is ACILGAVLRIRSAQAWKKA. A helical transmembrane segment spans residues 239 to 259; it reads LATCSSHLTAVTLFYGAAMFM. Residues 260 to 272 are Extracellular-facing; that stretch reads YLRPRRYRAPSHD. The helical transmembrane segment at 273–293 threads the bilayer; that stretch reads KVASIFYTVLTPMLNPLIYSL. The Cytoplasmic segment spans residues 294-315; it reads RNGEVMGALRKGLDRCRIGSQH.

The protein belongs to the G-protein coupled receptor 1 family.

It is found in the cell membrane. In terms of biological role, odorant receptor. In Homo sapiens (Human), this protein is Olfactory receptor 2V1 (OR2V1).